A 953-amino-acid polypeptide reads, in one-letter code: GATA zinc finger domain-containing protein 14 (953 aa).

The segment covering 1–21 has biased composition (polar residues); that stretch reads MFEKIPNQNSHSMGDNNTGYY. Disordered stretches follow at residues 1 to 109 and 216 to 756; these read MFEK…SPNR and TYGS…TQPQ. The span at 22 to 89 shows a compositional bias: low complexity; the sequence is NNNNNNNNNN…QLPSPQLSQP (68 aa). Polar residues predominate over residues 90-109; the sequence is NSMNTTPNQTSPNLRSSPNR. Low complexity-rich tracts occupy residues 219–330, 342–683, and 690–756; these read SSNT…VNAN, NIYN…PNSS, and GNNG…TQPQ. Residues 893 to 918 form a GATA-type zinc finger; it reads CTSCGTTQTPEWRKGPAGGKSLCNAC. The interval 934–953 is disordered; it reads KVETTSSPPSTSMNVVNLLN.

The protein is GATA zinc finger domain-containing protein 14 (gtaN) of Dictyostelium discoideum (Social amoeba).